A 233-amino-acid polypeptide reads, in one-letter code: Phosphoribosylaminoimidazole-succinocarboxamide synthase (233 aa).

Belongs to the SAICAR synthetase family.

The catalysed reaction is 5-amino-1-(5-phospho-D-ribosyl)imidazole-4-carboxylate + L-aspartate + ATP = (2S)-2-[5-amino-1-(5-phospho-beta-D-ribosyl)imidazole-4-carboxamido]succinate + ADP + phosphate + 2 H(+). It functions in the pathway purine metabolism; IMP biosynthesis via de novo pathway; 5-amino-1-(5-phospho-D-ribosyl)imidazole-4-carboxamide from 5-amino-1-(5-phospho-D-ribosyl)imidazole-4-carboxylate: step 1/2. The protein is Phosphoribosylaminoimidazole-succinocarboxamide synthase of Staphylococcus saprophyticus subsp. saprophyticus (strain ATCC 15305 / DSM 20229 / NCIMB 8711 / NCTC 7292 / S-41).